Here is a 197-residue protein sequence, read N- to C-terminus: Nucleoside triphosphate pyrophosphatase (197 aa).

The active-site Proton acceptor is Asp71.

The protein belongs to the Maf family. The cofactor is a divalent metal cation.

It is found in the cytoplasm. The enzyme catalyses a ribonucleoside 5'-triphosphate + H2O = a ribonucleoside 5'-phosphate + diphosphate + H(+). It carries out the reaction a 2'-deoxyribonucleoside 5'-triphosphate + H2O = a 2'-deoxyribonucleoside 5'-phosphate + diphosphate + H(+). In terms of biological role, nucleoside triphosphate pyrophosphatase. May have a dual role in cell division arrest and in preventing the incorporation of modified nucleotides into cellular nucleic acids. The protein is Nucleoside triphosphate pyrophosphatase of Trichormus variabilis (strain ATCC 29413 / PCC 7937) (Anabaena variabilis).